A 204-amino-acid polypeptide reads, in one-letter code: Ribosome maturation factor RimP (204 aa).

The protein belongs to the RimP family.

Its subcellular location is the cytoplasm. Functionally, required for maturation of 30S ribosomal subunits. In Albidiferax ferrireducens (strain ATCC BAA-621 / DSM 15236 / T118) (Rhodoferax ferrireducens), this protein is Ribosome maturation factor RimP.